The primary structure comprises 373 residues: NADPH-dependent 3-keto-steroid reductase HSD3B3 (373 aa).

NADP(+)-binding positions include Gly10–Leu15, Tyr155, and Lys159. The active-site Proton donor is Lys159. Residues Val288–Val308 traverse the membrane as a helical segment.

Belongs to the 3-beta-HSD family. High levels in adrenal gland, kidney and male liver (at protein level). Low levels in female liver (at protein level). Expressed in ovaries (at protein level).

It is found in the endoplasmic reticulum membrane. Its subcellular location is the mitochondrion membrane. The enzyme catalyses a 3beta-hydroxysteroid + NADP(+) = a 3-oxosteroid + NADPH + H(+). It catalyses the reaction 5alpha-androstane-3beta,17beta-diol + NADP(+) = 17beta-hydroxy-5alpha-androstan-3-one + NADPH + H(+). The protein operates within steroid metabolism. Responsible for the reduction of the oxo group on the C-3 of 5alpha-androstane steroids. Catalyzes the conversion of dihydrotestosterone to its inactive form 5alpha-androstanediol, that does not bind androgen receptor/AR. Does not function as an isomerase. This Mesocricetus auratus (Golden hamster) protein is NADPH-dependent 3-keto-steroid reductase HSD3B3 (HSD3B3).